The sequence spans 158 residues: Small ribosomal subunit protein bS16 (158 aa).

A compositionally biased stretch (low complexity) spans 111–121; sequence AAAGLAEAPTK. Positions 111 to 158 are disordered; that stretch reads AAAGLAEAPTKPAKKAPKAEAAPKTEAAPKADAPKTEEQAGAGSGEQG. Residues 127 to 148 are compositionally biased toward basic and acidic residues; the sequence is PKAEAAPKTEAAPKADAPKTEE.

The protein belongs to the bacterial ribosomal protein bS16 family.

This chain is Small ribosomal subunit protein bS16, found in Salinispora arenicola (strain CNS-205).